The primary structure comprises 635 residues: Threonine--tRNA ligase (635 aa).

The TGS domain occupies 1 to 61 (MTVVRLPDGT…EIDSDLVLIT (61 aa)). Residues 242–533 (DHRKLGKQLD…LIEHHAGALP (292 aa)) form a catalytic region. The Zn(2+) site is built by Cys-333, His-384, and His-510.

This sequence belongs to the class-II aminoacyl-tRNA synthetase family. Homodimer. Zn(2+) serves as cofactor.

It localises to the cytoplasm. It carries out the reaction tRNA(Thr) + L-threonine + ATP = L-threonyl-tRNA(Thr) + AMP + diphosphate + H(+). Functionally, catalyzes the attachment of threonine to tRNA(Thr) in a two-step reaction: L-threonine is first activated by ATP to form Thr-AMP and then transferred to the acceptor end of tRNA(Thr). Also edits incorrectly charged L-seryl-tRNA(Thr). The protein is Threonine--tRNA ligase of Nitrosomonas eutropha (strain DSM 101675 / C91 / Nm57).